The chain runs to 103 residues: Signal recognition particle 19 kDa protein (103 aa).

Belongs to the SRP19 family. As to quaternary structure, part of the signal recognition particle protein translocation system, which is composed of SRP and FtsY. Archaeal SRP consists of a 7S RNA molecule of 300 nucleotides and two protein subunits: SRP54 and SRP19.

It is found in the cytoplasm. Functionally, involved in targeting and insertion of nascent membrane proteins into the cytoplasmic membrane. Binds directly to 7S RNA and mediates binding of the 54 kDa subunit of the SRP. This is Signal recognition particle 19 kDa protein from Methanopyrus kandleri (strain AV19 / DSM 6324 / JCM 9639 / NBRC 100938).